The primary structure comprises 86 residues: Haditoxin (86 aa).

Positions 1 to 21 (MKTLLLTLVVVTIVYLDLGYT) are cleaved as a signal peptide. 4 disulfides stabilise this stretch: Cys24–Cys45, Cys38–Cys62, Cys66–Cys78, and Cys79–Cys84.

Belongs to the three-finger toxin family. Short-chain subfamily. Orphan group VIII (haditoxin) sub-subfamily. In terms of assembly, homodimer; non-covalently linked. In terms of tissue distribution, expressed by the venom gland.

Its subcellular location is the secreted. Antagonist of muscle (alpha-1-beta-1-delta-epsilon/CHRNA1-CHRNB1-CHRND-CHRNE) and neuronal (alpha-7/CHRNA7, alpha-3-beta-2/CHRNA3-CHRNB2, alpha-4-beta-2/CHRNA4-CHRNB2) nicotinic acetylcholine receptors (nAChR). The highest affinity is for human alpha-7/CHRNA7 nAChRs (IC(50)=180 nM), compared to human alpha-1-beta-1-delta-epsilon/CHRNA1-CHRNB1-CHRND-CHRNE nAChR (IC(50)= 550 nM), alpha-3-beta-2/CHRNA3-CHRNB2 nAChR (IC(50)=500 nM), and alpha-4-beta-2/CHRNA4-CHRNB2 nAChR (IC(50)=2.6 uM). In Ophiophagus hannah (King cobra), this protein is Haditoxin.